A 510-amino-acid polypeptide reads, in one-letter code: Protein HGV2 (510 aa).

Positions 95-227 (GVPEEDADGD…KENESEEDPD (133 aa)) are disordered. Positions 98-110 (EEDADGDSDQEQE) are enriched in acidic residues. Basic and acidic residues-rich tracts occupy residues 111–129 (QFEK…REEV) and 142–199 (EERG…DKPV). Low complexity predominate over residues 204 to 217 (TEEPGTSGTSASSS). TPR repeat units follow at residues 260–293 (AQCH…QKDL) and 302–335 (AETY…LEAR). The tract at residues 391–510 (DGSPFRQASE…TPKKDAAKRR (120 aa)) is disordered. Residues 398–411 (ASEGESSSGLGAST) are compositionally biased toward low complexity. 2 consecutive short sequence motifs (nuclear localization signal) follow at residues 444–451 (VRRKRPSP) and 465–471 (SKKAKQE). Residues 459-471 (ESKENESKKAKQE) show a composition bias toward basic and acidic residues.

Belongs to the NASP family. In terms of tissue distribution, embryo and larvae.

It localises to the nucleus. May function as a nucleosome assembly factor during rapid embryonic cell divisions. This chain is Protein HGV2 (HGV2), found in Halocynthia roretzi (Sea squirt).